Consider the following 318-residue polypeptide: GTP cyclohydrolase MptA (318 aa).

Belongs to the GTP cyclohydrolase IV family. Homodimer. It depends on Fe(2+) as a cofactor.

The enzyme catalyses GTP + H2O = 7,8-dihydroneopterin 2',3'-cyclic phosphate + formate + diphosphate + H(+). It participates in cofactor biosynthesis; 5,6,7,8-tetrahydromethanopterin biosynthesis. Its function is as follows. Converts GTP to 7,8-dihydro-D-neopterin 2',3'-cyclic phosphate, the first intermediate in the biosynthesis of coenzyme methanopterin. This chain is GTP cyclohydrolase MptA, found in Methanothermobacter thermautotrophicus (strain ATCC 29096 / DSM 1053 / JCM 10044 / NBRC 100330 / Delta H) (Methanobacterium thermoautotrophicum).